Here is a 319-residue protein sequence, read N- to C-terminus: 2-oxoglutarate and iron-dependent oxygenase domain-containing protein 3 (319 aa).

The segment at 1–34 is disordered; it reads MAPQRRAATKAPEGNGAAERRNRSSTKKDRAPRE. The Cytoplasmic portion of the chain corresponds to 1–42; that stretch reads MAPQRRAATKAPEGNGAAERRNRSSTKKDRAPREVQRLWQRP. The span at 18–34 shows a compositional bias: basic and acidic residues; that stretch reads AERRNRSSTKKDRAPRE. The helical; Signal-anchor for type II membrane protein transmembrane segment at 43–65 threads the bilayer; the sequence is WLRTAGLGAGFVLTALLLWSSLG. Topologically, residues 66–319 are lumenal; sequence ADDGVAEVLA…DHGIEDPAFP (254 aa). The Fe2OG dioxygenase domain occupies 207-309; sequence KPTFFSRINS…AITIAFSCNP (103 aa). N-linked (GlcNAc...) asparagine glycosylation occurs at Asn215. His230, Asp232, and His288 together coordinate Fe cation. Arg298 is a catalytic residue. Arg298 contributes to the 2-oxoglutarate binding site.

It belongs to the OGFOD3 family. Fe(2+) serves as cofactor. Requires L-ascorbate as cofactor.

The protein resides in the membrane. In Homo sapiens (Human), this protein is 2-oxoglutarate and iron-dependent oxygenase domain-containing protein 3 (OGFOD3).